We begin with the raw amino-acid sequence, 763 residues long: Lysine-specific histone demethylase 1 homolog 2 (763 aa).

The region spanning 53–152 is the SWIRM domain; it reads QRETETEALI…FGVSAAFPAS (100 aa). E192, R194, R200, and E571 together coordinate FAD.

This sequence belongs to the flavin monoamine oxidase family. FAD serves as cofactor.

Its function is as follows. Probable histone demethylase. This Oryza sativa subsp. japonica (Rice) protein is Lysine-specific histone demethylase 1 homolog 2.